The sequence spans 1567 residues: ABC multidrug transporter MDR1 (1567 aa).

Residues methionine 1–glycine 11 show a composition bias toward pro residues. The tract at residues methionine 1–aspartate 37 is disordered. A compositionally biased stretch (polar residues) spans serine 22–proline 32. Residues asparagine 149, asparagine 157, and asparagine 356 are each glycosylated (N-linked (GlcNAc...) asparagine). One can recognise an ABC transporter 1 domain in the interval valine 167–proline 432. 6 consecutive transmembrane segments (helical) span residues serine 543 to phenylalanine 563, glycine 571 to isoleucine 591, isoleucine 636 to leucine 656, alanine 661 to phenylalanine 681, isoleucine 691 to phenylalanine 711, and leucine 798 to leucine 818. N-linked (GlcNAc...) asparagine glycosylation is found at asparagine 819, asparagine 895, and asparagine 912. The ABC transporter 2 domain occupies phenylalanine 891 to alanine 1134. Glycine 927–threonine 934 lines the ATP pocket. The segment at glutamate 1172–proline 1202 is disordered. Residues isoleucine 1231 to leucine 1251 form a helical membrane-spanning segment. N-linked (GlcNAc...) asparagine glycosylation occurs at asparagine 1253. The next 5 helical transmembrane spans lie at alanine 1257–valine 1277, valine 1305–alanine 1325, isoleucine 1345–isoleucine 1365, glutamate 1372–leucine 1392, and glycine 1498–isoleucine 1518.

Belongs to the ABC transporter superfamily. ABCG family. PDR (TC 3.A.1.205) subfamily.

The protein resides in the cell membrane. It catalyses the reaction voriconazole(in) + ATP + H2O = voriconazole(out) + ADP + phosphate + H(+). The catalysed reaction is fluconazole(in) + ATP + H2O = fluconazole(out) + ADP + phosphate + H(+). The enzyme catalyses (R)-miconazole(in) + ATP + H2O = (R)-miconazole(out) + ADP + phosphate + H(+). It carries out the reaction (S)-miconazole(in) + ATP + H2O = (S)-miconazole(out) + ADP + phosphate + H(+). Its function is as follows. Pleiotropic ABC efflux transporter that may be involved in the modulation susceptibility to a wide range of unrelated cytotoxic compounds. This chain is ABC multidrug transporter MDR1, found in Trichophyton tonsurans (strain CBS 112818) (Scalp ringworm fungus).